Here is an 81-residue protein sequence, read N- to C-terminus: CLAVATA3/ESR (CLE)-related protein 12 (81 aa).

Positions 1 to 31 (MENSNKVPISKIGLIMLMIFSTFFMSPHARR) are cleaved as a signal peptide. A compositionally biased stretch (basic and acidic residues) spans 55–67 (KRSRTDLEDKAVP). The disordered stretch occupies residues 55-81 (KRSRTDLEDKAVPGDRLSPGGPNHIHN). Proline 73 and proline 76 each carry hydroxyproline. O-linked (Ara...) hydroxyproline glycosylation occurs at proline 76.

This sequence belongs to the CLV3/ESR signal peptide family. In terms of processing, the O-glycosylation (arabinosylation) of the hydroxyproline Pro-76 enhances binding affinity of the CLE12p peptide for its receptor. Expressed in young nodules throughout the central tissue. Expressed in the apical region of elongated nodules, corresponding to the meristematic and early infection zones.

It is found in the secreted. The protein localises to the extracellular space. In terms of biological role, signaling peptide involved in the regulation of nodulation. Moves from root to shoot to function with the receptor kinase SUNN, in a signaling pathway that plays roles during cellular differentiation, both at the onset of nodulation, and later during nodule meristem development and subsequent homeostasis. Interacts with SUNN signaling to control nodule numbers. SUNN is involved in the autoregulation of nodulation (AON), a long distance systemic signaling from root to shoot and back again, which allows legumes to limit the number of root nodules formed based on available nitrogen and previous rhizobial colonization. The sequence is that of CLAVATA3/ESR (CLE)-related protein 12 from Medicago truncatula (Barrel medic).